Reading from the N-terminus, the 174-residue chain is Peptide deformylase (174 aa).

Fe cation-binding residues include Cys-96 and His-138. Glu-139 is a catalytic residue. Residue His-142 coordinates Fe cation.

Belongs to the polypeptide deformylase family. Fe(2+) is required as a cofactor.

It carries out the reaction N-terminal N-formyl-L-methionyl-[peptide] + H2O = N-terminal L-methionyl-[peptide] + formate. In terms of biological role, removes the formyl group from the N-terminal Met of newly synthesized proteins. Requires at least a dipeptide for an efficient rate of reaction. N-terminal L-methionine is a prerequisite for activity but the enzyme has broad specificity at other positions. The protein is Peptide deformylase of Nautilia profundicola (strain ATCC BAA-1463 / DSM 18972 / AmH).